Here is a 192-residue protein sequence, read N- to C-terminus: UPF0312 protein PSPTO_5071 (192 aa).

The first 23 residues, 1–23, serve as a signal peptide directing secretion; that stretch reads MLKKSLAALALGTALLSAGQAMA.

The protein belongs to the UPF0312 family. Type 1 subfamily.

The protein resides in the periplasm. The protein is UPF0312 protein PSPTO_5071 of Pseudomonas syringae pv. tomato (strain ATCC BAA-871 / DC3000).